An 892-amino-acid polypeptide reads, in one-letter code: Alanine--tRNA ligase (892 aa).

Zn(2+)-binding residues include His574, His578, Cys677, and His681.

It belongs to the class-II aminoacyl-tRNA synthetase family. The cofactor is Zn(2+).

It is found in the cytoplasm. The catalysed reaction is tRNA(Ala) + L-alanine + ATP = L-alanyl-tRNA(Ala) + AMP + diphosphate. In terms of biological role, catalyzes the attachment of alanine to tRNA(Ala) in a two-step reaction: alanine is first activated by ATP to form Ala-AMP and then transferred to the acceptor end of tRNA(Ala). Also edits incorrectly charged Ser-tRNA(Ala) and Gly-tRNA(Ala) via its editing domain. This is Alanine--tRNA ligase from Mesoplasma florum (strain ATCC 33453 / NBRC 100688 / NCTC 11704 / L1) (Acholeplasma florum).